The following is a 336-amino-acid chain: Glycerol-3-phosphate dehydrogenase [NAD(P)+] (336 aa).

Residues Ser14, Trp15, Arg35, Arg36, and Lys109 each contribute to the NADPH site. The sn-glycerol 3-phosphate site is built by Lys109 and Gly139. Residue Ala143 coordinates NADPH. Positions 194, 247, 257, 258, and 259 each coordinate sn-glycerol 3-phosphate. The Proton acceptor role is filled by Lys194. An NADPH-binding site is contributed by Arg258. Residue Glu284 participates in NADPH binding.

Belongs to the NAD-dependent glycerol-3-phosphate dehydrogenase family.

It is found in the cytoplasm. It carries out the reaction sn-glycerol 3-phosphate + NAD(+) = dihydroxyacetone phosphate + NADH + H(+). The catalysed reaction is sn-glycerol 3-phosphate + NADP(+) = dihydroxyacetone phosphate + NADPH + H(+). The protein operates within membrane lipid metabolism; glycerophospholipid metabolism. Functionally, catalyzes the reduction of the glycolytic intermediate dihydroxyacetone phosphate (DHAP) to sn-glycerol 3-phosphate (G3P), the key precursor for phospholipid synthesis. The chain is Glycerol-3-phosphate dehydrogenase [NAD(P)+] from Streptomyces griseus subsp. griseus (strain JCM 4626 / CBS 651.72 / NBRC 13350 / KCC S-0626 / ISP 5235).